Reading from the N-terminus, the 396-residue chain is Phosphopentomutase (396 aa).

6 residues coordinate Mn(2+): Asp13, Asp288, His293, Asp329, His330, and His341.

This sequence belongs to the phosphopentomutase family. It depends on Mn(2+) as a cofactor.

It is found in the cytoplasm. The enzyme catalyses 2-deoxy-alpha-D-ribose 1-phosphate = 2-deoxy-D-ribose 5-phosphate. It catalyses the reaction alpha-D-ribose 1-phosphate = D-ribose 5-phosphate. It functions in the pathway carbohydrate degradation; 2-deoxy-D-ribose 1-phosphate degradation; D-glyceraldehyde 3-phosphate and acetaldehyde from 2-deoxy-alpha-D-ribose 1-phosphate: step 1/2. Isomerase that catalyzes the conversion of deoxy-ribose 1-phosphate (dRib-1-P) and ribose 1-phosphate (Rib-1-P) to deoxy-ribose 5-phosphate (dRib-5-P) and ribose 5-phosphate (Rib-5-P), respectively. The chain is Phosphopentomutase from Clostridium botulinum (strain Alaska E43 / Type E3).